We begin with the raw amino-acid sequence, 365 residues long: c-di-GMP synthase (365 aa).

Belongs to the CD-NTase family. E subfamily.

It catalyses the reaction 2 GTP = 3',3'-c-di-GMP + 2 diphosphate. Functionally, cyclic nucleotide synthase (second messenger synthase) of a CBASS antivirus system. CBASS (cyclic oligonucleotide-based antiphage signaling system) provides immunity against bacteriophage. The CD-NTase protein synthesizes cyclic nucleotides in response to infection; these serve as specific second messenger signals. The signals activate a diverse range of effectors, leading to bacterial cell death and thus abortive phage infection. A type I-D(GG) CBASS system. Its function is as follows. Cyclic dinucleotide synthase that catalyzes the synthesis of c-di-GMP, has no activity with other NTP substrates. The protein is c-di-GMP synthase of Flavobacteriaceae sp. genome_bin_11.